We begin with the raw amino-acid sequence, 932 residues long: Adhesion G protein-coupled receptor E2 (932 aa).

A signal peptide spans 1 to 15 (MWGFWLLLFWGFSGT). Over 16–652 (HRWGMTTLAI…TMEFSLYIIS (637 aa)) the chain is Extracellular. 2 EGF-like domains span residues 32 to 69 (GVNECQDTTTCPAYATCTDTTESYYCTCKQGFLPSNGQ) and 81 to 119 (DVNECLRSDSPCGSNSVCTNIPGRARCSCLSGFSSSAGG). Disulfide bonds link C36/C48, C42/C57, C85/C98, C92/C107, C137/C149, C143/C158, C160/C171, C177/C189, C183/C198, C226/C239, and C233/C248. An EGF-like 3; calcium-binding domain is found at 133–172 (DVDECLTIGICPKNSNCSNSVGSYSCTCQSGFVSNGSTCE). N-linked (GlcNAc...) asparagine glycosylation is found at N148 and N167. An EGF-like 4; calcium-binding domain is found at 173–210 (DEDECVTRNACPEHATCHNTLGSYYCTCNEGLEFSGGG). Residues 222 to 260 (DVDECSRNSTLCGPSFICINTLGSYSCSCPAGFSLSTFQ) enclose the EGF-like 5; calcium-binding domain. An N-linked (GlcNAc...) asparagine glycan is attached at N229. N-linked (GlcNAc...) asparagine glycosylation is found at N269, N283, N309, N333, N344, N363, N405, N417, N474, and N499. In terms of domain architecture, EGF-like 6; calcium-binding spans 272 to 307 (DIDECDDICPSNSSCTNTLGSYFCTCHPGFASSNGQ). Disulfide bonds link C276–C286 and C280–C295. Residues 319–354 (DIDECTQDPFRCGRNSSCTNVPGSYNCSCLPDFRMD) enclose the EGF-like 7; calcium-binding domain. 2 cysteine pairs are disulfide-bonded: C323/C336 and C330/C345. A GAIN-B domain is found at 482 to 643 (EYLEIESKVI…AIIMASGELT (162 aa)). The Cell attachment site motif lies at 507-509 (RGD). 2 disulfide bridges follow: C596–C625 and C613–C627. Residues 596-643 (CVSWNTDVEDGRWTPSGCETVEASETHTVCSCNRMTNLAIIMASGELT) are GPS. A helical transmembrane segment spans residues 653 to 673 (YVGTVISLVCLALAIATFLLF). The Cytoplasmic segment spans residues 674-681 (RAVQNHNT). A helical transmembrane segment spans residues 682–702 (YLHLHLCVCLFLAKILFLTGI). The Extracellular portion of the chain corresponds to 703–719 (DKTDNQTACAIIAGFLH). Residue N707 is glycosylated (N-linked (GlcNAc...) asparagine). The chain crosses the membrane as a helical span at residues 720 to 740 (YLFLACFFWMLVEAVMLFLMV). Over 741-756 (RNLKVVNYFSSRNIKM) the chain is Cytoplasmic. A helical membrane pass occupies residues 757-777 (LHLCAFGYGLPVVVVIISATV). The Extracellular segment spans residues 778-795 (HPWGYGMHNRCWLNTETG). A helical membrane pass occupies residues 796 to 816 (FIWSFLGPVCMIITINSALLA). Residues 817–849 (WTLWVLRQKLCSVNSEVSKLKDTRLLTFKAIAQ) lie on the Cytoplasmic side of the membrane. A helical transmembrane segment spans residues 850–870 (IFILGCSWVLGIFQIGPLASI). Residues 871–872 (MA) lie on the Extracellular side of the membrane. Residues 873 to 893 (YLFTTINSLQGAFIFLIHCLL) form a helical membrane-spanning segment. Residues 894-932 (NRQVRDEYRKLLTRKTDLSSHSQTSGILLSSMPSTSKTG) lie on the Cytoplasmic side of the membrane.

Belongs to the G-protein coupled receptor 2 family. Adhesion G-protein coupled receptor (ADGR) subfamily.

It is found in the cell membrane. Orphan receptor involved in cell adhesion and probably in cell-cell interactions involved specifically cells of the immune system. May play a role in regulatory T-cells (Treg) development. The polypeptide is Adhesion G protein-coupled receptor E2 (Adgre1) (Rattus norvegicus (Rat)).